The following is a 420-amino-acid chain: Glutamyl-tRNA reductase (420 aa).

Residues 49–52 (TCNR), Ser109, 114–116 (EPQ), and Gln120 contribute to the substrate site. Cys50 acts as the Nucleophile in catalysis. 189-194 (GAGETI) serves as a coordination point for NADP(+).

Belongs to the glutamyl-tRNA reductase family. As to quaternary structure, homodimer.

It carries out the reaction (S)-4-amino-5-oxopentanoate + tRNA(Glu) + NADP(+) = L-glutamyl-tRNA(Glu) + NADPH + H(+). Its pathway is porphyrin-containing compound metabolism; protoporphyrin-IX biosynthesis; 5-aminolevulinate from L-glutamyl-tRNA(Glu): step 1/2. Its function is as follows. Catalyzes the NADPH-dependent reduction of glutamyl-tRNA(Glu) to glutamate 1-semialdehyde (GSA). The protein is Glutamyl-tRNA reductase of Yersinia pseudotuberculosis serotype O:1b (strain IP 31758).